We begin with the raw amino-acid sequence, 247 residues long: Flagellin B1 (247 aa).

The propeptide occupies 1–20 (MNKLLRKVRKAFSLKADNKA).

Belongs to the archaeal flagellin family. In terms of processing, glycosylated.

The protein localises to the archaeal flagellum. In terms of biological role, flagellin is the subunit protein which polymerizes to form the filaments of archaeal flagella. This is Flagellin B1 from Thermoplasma volcanium (strain ATCC 51530 / DSM 4299 / JCM 9571 / NBRC 15438 / GSS1).